Here is a 1342-residue protein sequence, read N- to C-terminus: Cytokinesis protein sepH (1342 aa).

Low complexity predominate over residues 1–10; that stretch reads MVSRSSEGAE. The disordered stretch occupies residues 1–47; sequence MVSRSSEGAEGPPPSAPKPPNTPAKSRLSRLGSSPSKREDKSRDDRM. Over residues 11–22 the composition is skewed to pro residues; the sequence is GPPPSAPKPPNT. Residues 36 to 47 show a composition bias toward basic and acidic residues; sequence SKREDKSRDDRM. Positions 61–308 constitute a Protein kinase domain; that stretch reads YQLGDCLGKG…ARKLLKHPWI (248 aa). Residues 67-75 and Lys-90 contribute to the ATP site; that span reads LGKGAFGSV. Asp-180 serves as the catalytic Proton acceptor. Disordered stretches follow at residues 336–396, 441–486, and 552–591; these read NEAL…EEDN, IKSD…QLQE, and ADEN…ISVK. Polar residues predominate over residues 369–379; sequence KDTLPSPVSRN. Positions 658-695 form a coiled coil; the sequence is FAQLEEGLDEMDLEANIARDKHARLRNQVEGLVSSLKT. The segment at 1201–1342 is disordered; that stretch reads SEAYGMGKRK…QTQADADWTP (142 aa). Positions 1207–1217 are enriched in basic residues; it reads GKRKPMVRRRS. Composition is skewed to polar residues over residues 1218–1244 and 1273–1290; these read TSAT…SQSK and DGST…TGAS. Low complexity predominate over residues 1315 to 1324; the sequence is RPSSSLSRRQ.

This sequence belongs to the protein kinase superfamily. Ser/Thr protein kinase family. CDC7 subfamily. Mg(2+) serves as cofactor.

It catalyses the reaction L-seryl-[protein] + ATP = O-phospho-L-seryl-[protein] + ADP + H(+). It carries out the reaction L-threonyl-[protein] + ATP = O-phospho-L-threonyl-[protein] + ADP + H(+). Its function is as follows. Required for early events during cytokinesis including localization of cytoskeletal components to the cytokinetic ring. The polypeptide is Cytokinesis protein sepH (Aspergillus terreus (strain NIH 2624 / FGSC A1156)).